Here is a 178-residue protein sequence, read N- to C-terminus: Ribosome maturation factor RimM (178 aa).

The region spanning 100–178 is the PRC barrel domain; that stretch reads TDGEYYWYQL…EMKVEWDADF (79 aa).

Belongs to the RimM family. As to quaternary structure, binds ribosomal protein uS19.

It localises to the cytoplasm. An accessory protein needed during the final step in the assembly of 30S ribosomal subunit, possibly for assembly of the head region. Essential for efficient processing of 16S rRNA. May be needed both before and after RbfA during the maturation of 16S rRNA. It has affinity for free ribosomal 30S subunits but not for 70S ribosomes. The chain is Ribosome maturation factor RimM from Pseudomonas fluorescens (strain SBW25).